We begin with the raw amino-acid sequence, 364 residues long: FNIP repeat-containing protein DDB_G0277323 (364 aa).

FNIP repeat units lie at residues 57–98 (MNIE…DLKY), 155–198 (YDCL…FGWT), 214–244 (LRVL…FGSS), 245–271 (FNQV…NQPI), and 295–340 (FNQP…FINN).

This chain is FNIP repeat-containing protein DDB_G0277323, found in Dictyostelium discoideum (Social amoeba).